Reading from the N-terminus, the 155-residue chain is Small ribosomal subunit protein uS7c (155 aa).

Belongs to the universal ribosomal protein uS7 family. Part of the 30S ribosomal subunit.

Its subcellular location is the plastid. The protein resides in the chloroplast. Functionally, one of the primary rRNA binding proteins, it binds directly to 16S rRNA where it nucleates assembly of the head domain of the 30S subunit. This chain is Small ribosomal subunit protein uS7c (rps7), found in Typha angustifolia (Narrow leaf cattail).